The chain runs to 339 residues: Tetraacyldisaccharide 4'-kinase (339 aa).

Residue 58–65 participates in ATP binding; the sequence is TVGGSGKT.

The protein belongs to the LpxK family.

The catalysed reaction is a lipid A disaccharide + ATP = a lipid IVA + ADP + H(+). It participates in glycolipid biosynthesis; lipid IV(A) biosynthesis; lipid IV(A) from (3R)-3-hydroxytetradecanoyl-[acyl-carrier-protein] and UDP-N-acetyl-alpha-D-glucosamine: step 6/6. Its function is as follows. Transfers the gamma-phosphate of ATP to the 4'-position of a tetraacyldisaccharide 1-phosphate intermediate (termed DS-1-P) to form tetraacyldisaccharide 1,4'-bis-phosphate (lipid IVA). In Shewanella baltica (strain OS195), this protein is Tetraacyldisaccharide 4'-kinase.